Reading from the N-terminus, the 277-residue chain is Large ribosomal subunit protein uL2 (277 aa).

The segment at 225-277 (MNPVDHPHGGGEGKTSGGRNSVTPWGVPTKGKKTRKRGKHSDKYIKVSSVRKR) is disordered. Positions 254–264 (KGKKTRKRGKH) are enriched in basic residues.

It belongs to the universal ribosomal protein uL2 family. As to quaternary structure, part of the 50S ribosomal subunit. Forms a bridge to the 30S subunit in the 70S ribosome.

Its function is as follows. One of the primary rRNA binding proteins. Required for association of the 30S and 50S subunits to form the 70S ribosome, for tRNA binding and peptide bond formation. It has been suggested to have peptidyltransferase activity; this is somewhat controversial. Makes several contacts with the 16S rRNA in the 70S ribosome. The sequence is that of Large ribosomal subunit protein uL2 from Anaplasma marginale (strain Florida).